A 297-amino-acid polypeptide reads, in one-letter code: MTSSIFRTIGIIGYSRHPKAVHTYDILYHWLYSKGITVIIEHHAASLLNVQKAVVGDLNDIGNYADLAIVIGGDGNMLRAANILAQHDIKVIGINRGTLGFLTDLDPNSALVELSDVLSGHFINEKRFLLDVTVQRYNKLIRLGSAINEVILHTNTIRDMIEFELYIDDNFIFSQRSDGLIISTPTGSTAYALSAGGPILSPTVDAILLVPICPHTLSSRPVVINSKSIICLKFSKVTSELKIGYDNQTPVLVCKEEEIFIKRSNHYLDLIHPNNYNYFKTLNIKLGWSQNIAETKK.

The active-site Proton acceptor is the D74. NAD(+) is bound by residues 74-75, R79, 148-149, R176, D178, 189-194, and Q248; these read DG, NE, and TAYALS.

Belongs to the NAD kinase family. The cofactor is a divalent metal cation.

Its subcellular location is the cytoplasm. It catalyses the reaction NAD(+) + ATP = ADP + NADP(+) + H(+). Involved in the regulation of the intracellular balance of NAD and NADP, and is a key enzyme in the biosynthesis of NADP. Catalyzes specifically the phosphorylation on 2'-hydroxyl of the adenosine moiety of NAD to yield NADP. This Blochmanniella pennsylvanica (strain BPEN) protein is NAD kinase.